A 65-amino-acid polypeptide reads, in one-letter code: Large ribosomal subunit protein bL28 (65 aa).

A disordered region spans residues 1-26 (MARRDDLTNKGPMSGNKRSHALNATK). The segment covering 17-26 (KRSHALNATK) has biased composition (basic residues).

Belongs to the bacterial ribosomal protein bL28 family.

This Mycoplasma mobile (strain ATCC 43663 / 163K / NCTC 11711) (Mesomycoplasma mobile) protein is Large ribosomal subunit protein bL28.